We begin with the raw amino-acid sequence, 333 residues long: Leucine carboxyl methyltransferase 1 (333 aa).

Residues Lys-42, Arg-82, Gly-107, Asp-131, Asp-181–Leu-182, and Glu-208 each bind S-adenosyl-L-methionine.

It belongs to the methyltransferase superfamily. LCMT family.

It carries out the reaction [phosphatase 2A protein]-C-terminal L-leucine + S-adenosyl-L-methionine = [phosphatase 2A protein]-C-terminal L-leucine methyl ester + S-adenosyl-L-homocysteine. Functionally, methylates the carboxyl group of the C-terminal leucine residue of protein phosphatase 2A catalytic subunits to form alpha-leucine ester residues. This is Leucine carboxyl methyltransferase 1 from Caenorhabditis elegans.